The sequence spans 245 residues: Ribonuclease PH (245 aa).

Phosphate contacts are provided by residues Arg-86 and 124–126 (GTR).

The protein belongs to the RNase PH family. In terms of assembly, homohexameric ring arranged as a trimer of dimers.

It catalyses the reaction tRNA(n+1) + phosphate = tRNA(n) + a ribonucleoside 5'-diphosphate. Functionally, phosphorolytic 3'-5' exoribonuclease that plays an important role in tRNA 3'-end maturation. Removes nucleotide residues following the 3'-CCA terminus of tRNAs; can also add nucleotides to the ends of RNA molecules by using nucleoside diphosphates as substrates, but this may not be physiologically important. Probably plays a role in initiation of 16S rRNA degradation (leading to ribosome degradation) during starvation. The polypeptide is Ribonuclease PH (Bacillus anthracis (strain A0248)).